The primary structure comprises 190 residues: FASEIAGVDDLGTTGRKTESIDVMDAVGSNIVVSTRFAYDGLKRQRLTEPMVRGLLTYTSWEDALSRFEAPLFNARVALIGSPVDLTYRYDHLGDSPKIASQVAALDLGYKPGVEAIRKNPPKLLFLLGADGGCITRSATYVNTEGRVAVTPPGLAREDWKALSEIAGITLPYDTLDQVRDFYMTDSISR.

It belongs to the complex I 75 kDa subunit family. As to quaternary structure, core subunit of respiratory chain NADH dehydrogenase (Complex I) which is composed of 45 different subunits. This is the largest subunit of complex I and it is a component of the iron-sulfur (IP) fragment of the enzyme. Complex I associates with ubiquinol-cytochrome reductase complex (Complex III) to form supercomplexes. Interacts with MDM2 and AKAP1. [2Fe-2S] cluster serves as cofactor. Requires [4Fe-4S] cluster as cofactor.

The protein localises to the mitochondrion inner membrane. It carries out the reaction a ubiquinone + NADH + 5 H(+)(in) = a ubiquinol + NAD(+) + 4 H(+)(out). Its function is as follows. Core subunit of the mitochondrial membrane respiratory chain NADH dehydrogenase (Complex I) which catalyzes electron transfer from NADH through the respiratory chain, using ubiquinone as an electron acceptor. Essential for catalysing the entry and efficient transfer of electrons within complex I. Plays a key role in the assembly and stability of complex I and participates in the association of complex I with ubiquinol-cytochrome reductase complex (Complex III) to form supercomplexes. The protein is NADH-ubiquinone oxidoreductase 75 kDa subunit, mitochondrial of Mesocricetus auratus (Golden hamster).